Here is a 580-residue protein sequence, read N- to C-terminus: Dihydroxy-acid dehydratase (580 aa).

The segment at 1–31 (MPSGSSESPADALRASDSTPDIKPRSRDVTD) is disordered. Residues 20 to 31 (PDIKPRSRDVTD) are compositionally biased toward basic and acidic residues. C69 serves as a coordination point for [2Fe-2S] cluster. Residue D101 coordinates Mg(2+). [2Fe-2S] cluster is bound at residue C142. Residues D143 and K144 each contribute to the Mg(2+) site. At K144 the chain carries N6-carboxylysine. C219 is a [2Fe-2S] cluster binding site. E470 contributes to the Mg(2+) binding site. The Proton acceptor role is filled by S496.

Belongs to the IlvD/Edd family. Homodimer. [2Fe-2S] cluster serves as cofactor. Mg(2+) is required as a cofactor.

The catalysed reaction is (2R)-2,3-dihydroxy-3-methylbutanoate = 3-methyl-2-oxobutanoate + H2O. It carries out the reaction (2R,3R)-2,3-dihydroxy-3-methylpentanoate = (S)-3-methyl-2-oxopentanoate + H2O. It participates in amino-acid biosynthesis; L-isoleucine biosynthesis; L-isoleucine from 2-oxobutanoate: step 3/4. Its pathway is amino-acid biosynthesis; L-valine biosynthesis; L-valine from pyruvate: step 3/4. Its function is as follows. Functions in the biosynthesis of branched-chain amino acids. Catalyzes the dehydration of (2R,3R)-2,3-dihydroxy-3-methylpentanoate (2,3-dihydroxy-3-methylvalerate) into 2-oxo-3-methylpentanoate (2-oxo-3-methylvalerate) and of (2R)-2,3-dihydroxy-3-methylbutanoate (2,3-dihydroxyisovalerate) into 2-oxo-3-methylbutanoate (2-oxoisovalerate), the penultimate precursor to L-isoleucine and L-valine, respectively. The polypeptide is Dihydroxy-acid dehydratase (Mycobacterium sp. (strain JLS)).